Reading from the N-terminus, the 78-residue chain is Large ribosomal subunit protein bL28 (78 aa).

Positions 1-20 (MSRVCQVTSKRPAVGNNRSH) are disordered.

It belongs to the bacterial ribosomal protein bL28 family.

The sequence is that of Large ribosomal subunit protein bL28 from Haemophilus ducreyi (strain 35000HP / ATCC 700724).